The sequence spans 145 residues: Acidic phospholipase A2 (145 aa).

The first 21 residues, 1-21 (MYPAHLLVLLAVCVSLLGAAS), serve as a signal peptide directing secretion. The propeptide occupies 22 to 27 (IPPLPL). 7 disulfide bridges follow: Cys-38-Cys-98, Cys-54-Cys-144, Cys-56-Cys-72, Cys-71-Cys-125, Cys-78-Cys-118, Cys-87-Cys-111, and Cys-105-Cys-116. Ca(2+)-binding residues include Tyr-55 and Gly-57. The active site involves His-75. Asp-76 contributes to the Ca(2+) binding site. Asp-119 is an active-site residue.

It belongs to the phospholipase A2 family. Group I subfamily. D49 sub-subfamily. Ca(2+) serves as cofactor. Expressed by the venom gland.

Its subcellular location is the secreted. It carries out the reaction a 1,2-diacyl-sn-glycero-3-phosphocholine + H2O = a 1-acyl-sn-glycero-3-phosphocholine + a fatty acid + H(+). In terms of biological role, PLA2 catalyzes the calcium-dependent hydrolysis of the 2-acyl groups in 3-sn-phosphoglycerides. The sequence is that of Acidic phospholipase A2 from Notechis scutatus scutatus (Mainland tiger snake).